A 275-amino-acid polypeptide reads, in one-letter code: Chlorophyll a-b binding protein 3, chloroplastic (275 aa).

Tryptophan 58 lines the chlorophyll b pocket. Residues phenylalanine 78, serine 84, and glutamate 102 each coordinate chlorophyll a. Chlorophyll b is bound by residues arginine 107, isoleucine 142, glutamate 169, and arginine 172. Positions 226, 227, 230, 232, 244, and 259 each coordinate chlorophyll a. A helical transmembrane segment spans residues 233-253; the sequence is LAMLAILGYFIQGLVTGVGPY.

The protein belongs to the light-harvesting chlorophyll a/b-binding (LHC) protein family. The LHC complex consists of chlorophyll a-b binding proteins. The cofactor is Binds at least 14 chlorophylls (8 Chl-a and 6 Chl-b) and carotenoids such as lutein and neoxanthin.. In terms of processing, photoregulated by reversible phosphorylation of its threonine residues.

It is found in the plastid. The protein localises to the chloroplast thylakoid membrane. Its function is as follows. The light-harvesting complex (LHC) functions as a light receptor, it captures and delivers excitation energy to photosystems with which it is closely associated. May channel protons produced in the catalytic Mn center of water oxidation into the thylakoid lumen. The sequence is that of Chlorophyll a-b binding protein 3, chloroplastic from Pisum sativum (Garden pea).